The chain runs to 635 residues: MTNSNLRTENHFDYVKIKLASPERVMEWGQRTLPNGQVVGEVTKPETINYRTLKPEMDGLFCEKIFGPSKDWECHCGKYKRVRHRGIVCERCGVEVTESRVRRHRMGFIKLAAPVSHVWYLKGIPSYVAILLDMPLRDVEQIVYFNCYVVLDIGDSKDLKYKQLLTEDEWLEIEDEIYAEDSTIENEPIVGIGAEALKQLLEDLNLKEVAEQLREDIATSKGQKRAKLIKRLRVIDNFIATSASPEWMVLDAIPVIPPDLRPMVQLDGGRFATSDLNDLYRRVINRNNRLARLQEILAPEIIVRNEKRMLQEAVDALIDNGRRGRTVVGANNRPLKSLSDIIEGKQGRFRQNLLGKRVDYSGRSVIVVGPKLKMHQCGLPKEMAIELFQPFVIHRLIRQNIVNNIKAAKKLIQKADDEVMQVLQEVIEGHPILLNRAPTLHRLGIQAFEPKLVAGRAIQLHPLVCPAFNADFDGDQMAVHVPLAIEAQTEARMLMLASNNILSPATGDPIVTPSQDMVLGSYYLTAIQPQSKQPKFGDYSNTYASLEDVLQALEDKRIDLHDWVWVRFSGEIEDDDELQNPLKSETLKDGTRIEEWTYRRDRLDEDGSLISRYILTTVGRVVMNHTIIDAVAATS.

Zn(2+) is bound by residues cysteine 74, cysteine 76, cysteine 89, and cysteine 92. Residues aspartate 471, aspartate 473, and aspartate 475 each contribute to the Mg(2+) site.

This sequence belongs to the RNA polymerase beta' chain family. RpoC1 subfamily. As to quaternary structure, in cyanobacteria the RNAP catalytic core is composed of 2 alpha, 1 beta, 1 beta', 1 gamma and 1 omega subunit. When a sigma factor is associated with the core the holoenzyme is formed, which can initiate transcription. It depends on Mg(2+) as a cofactor. Requires Zn(2+) as cofactor.

It carries out the reaction RNA(n) + a ribonucleoside 5'-triphosphate = RNA(n+1) + diphosphate. DNA-dependent RNA polymerase catalyzes the transcription of DNA into RNA using the four ribonucleoside triphosphates as substrates. This is DNA-directed RNA polymerase subunit gamma from Prochlorococcus marinus (strain NATL2A).